Reading from the N-terminus, the 227-residue chain is Cleavage and polyadenylation specificity factor subunit 5 (227 aa).

Ser-2 is modified (N-acetylserine). The interval 2–147 (SVVPPNRSQT…DWVIDDCIGN (146 aa)) is necessary for RNA-binding. At Arg-15 the chain carries Omega-N-methylarginine. N6-acetyllysine occurs at positions 23 and 29. Residue Tyr-40 is modified to Phosphotyrosine. An N6-acetyllysine modification is found at Lys-56. The Nudix hydrolase domain occupies 76-201 (MRRTVEGVLI…KLVAAPLFEL (126 aa)). The necessary for interactions with PAPOLA and PABPN1 stretch occupies residues 81-160 (EGVLIVHEHR…PNFEPPQYPY (80 aa)). An interaction with RNA region spans residues 102-104 (TFF). The Nudix box signature appears at 109-130 (GELNPGEDEVEGLKRLMTEILG).

It belongs to the Nudix hydrolase family. CPSF5 subfamily. As to quaternary structure, homodimer (via N- and C-terminus); binds RNA as homodimer. Component of the cleavage factor Im (CFIm) complex which is a heterotetramer composed of two subunits of NUDT21/CPSF5 and two subunits of CPSF6 or CPSF7 or a heterodimer of CPSF6 and CPSF7. The cleavage factor Im (CFIm) complex associates with the CPSF and CSTF complexes to promote the assembly of the core mRNA 3'-processing machinery. Interacts with CPSF6 (via the RRM domain); this interaction is direct and enhances binding to RNA. Interacts with CPSF7. Interacts with FIP1L1; this interaction occurs in a RNA sequence-specific manner. Interacts with PABPN1. Interacts (via N-terminus) with PAPOLA (via C-terminus); this interaction is direct and diminished by acetylation. Interacts with SNRNP70. Interacts with VIRMA. Acetylated mainly by p300/CBP, recruited to the complex by CPSF6. Acetylation decreases interaction with PAPAO. Deacetylated by the class I/II HDACs, HDAC1, HDAC3 and HDAC10, and by the class III HDACs, SIRT1 and SIRT2.

It localises to the nucleus. The protein localises to the cytoplasm. Component of the cleavage factor Im (CFIm) complex that functions as an activator of the pre-mRNA 3'-end cleavage and polyadenylation processing required for the maturation of pre-mRNA into functional mRNAs. CFIm contributes to the recruitment of multiprotein complexes on specific sequences on the pre-mRNA 3'-end, so called cleavage and polyadenylation signals (pA signals). Most pre-mRNAs contain multiple pA signals, resulting in alternative cleavage and polyadenylation (APA) producing mRNAs with variable 3'-end formation. The CFIm complex acts as a key regulator of cleavage and polyadenylation site choice during APA through its binding to 5'-UGUA-3' elements localized in the 3'-untranslated region (UTR) for a huge number of pre-mRNAs. NUDT21/CPSF5 activates indirectly the mRNA 3'-processing machinery by recruiting CPSF6 and/or CPSF7. Binds to 5'-UGUA-3' elements localized upstream of pA signals that act as enhancers of pre-mRNA 3'-end processing. The homodimer mediates simultaneous sequence-specific recognition of two 5'-UGUA-3' elements within the pre-mRNA. Plays a role in somatic cell fate transitions and pluripotency by regulating widespread changes in gene expression through an APA-dependent function. Binds to chromatin. Binds to, but does not hydrolyze mono- and di-adenosine nucleotides. This chain is Cleavage and polyadenylation specificity factor subunit 5 (NUDT21), found in Bos taurus (Bovine).